The chain runs to 742 residues: Protein CdcH (742 aa).

ATP-binding positions include 230–237 (GPPGTGKT) and 503–510 (GPPGTGKT). The interval 722–742 (FKGSQGPNVNSRQGSEHIGFQ) is disordered. The segment covering 723 to 734 (KGSQGPNVNSRQ) has biased composition (polar residues).

Belongs to the AAA ATPase family. CDC48 subfamily.

Its function is as follows. May be part of a transduction pathway connecting light to cell division. The protein is Protein CdcH (cdcH) of Halobacterium salinarum (strain ATCC 700922 / JCM 11081 / NRC-1) (Halobacterium halobium).